The sequence spans 412 residues: Imidazolonepropionase (412 aa).

His76 and His78 together coordinate Fe(3+). Residues His76 and His78 each coordinate Zn(2+). The 4-imidazolone-5-propanoate site is built by Arg85, Tyr148, and His181. Tyr148 provides a ligand contact to N-formimidoyl-L-glutamate. Residue His242 participates in Fe(3+) binding. His242 lines the Zn(2+) pocket. Glu245 is a binding site for 4-imidazolone-5-propanoate. Asp317 is a Fe(3+) binding site. Asp317 provides a ligand contact to Zn(2+). Residues Asn319 and Gly321 each coordinate N-formimidoyl-L-glutamate. Ser322 contacts 4-imidazolone-5-propanoate.

Belongs to the metallo-dependent hydrolases superfamily. HutI family. Zn(2+) is required as a cofactor. Requires Fe(3+) as cofactor.

The protein localises to the cytoplasm. It catalyses the reaction 4-imidazolone-5-propanoate + H2O = N-formimidoyl-L-glutamate. It functions in the pathway amino-acid degradation; L-histidine degradation into L-glutamate; N-formimidoyl-L-glutamate from L-histidine: step 3/3. In terms of biological role, catalyzes the hydrolytic cleavage of the carbon-nitrogen bond in imidazolone-5-propanoate to yield N-formimidoyl-L-glutamate. It is the third step in the universal histidine degradation pathway. The sequence is that of Imidazolonepropionase from Staphylococcus aureus (strain bovine RF122 / ET3-1).